The following is a 708-amino-acid chain: F-box protein MAX2 homolog A (708 aa).

The region spanning 2–49 (ATQLNDLPDVILSNIIAAVTDVRSRNSTSFVCRKWLVLERSTRVSLTL) is the F-box domain.

Part of a putative SCF (SKP1/Cullin/F-box) ubiquitin ligase complex. Interacts with DAD2. Interacts with KAI2IA in the presence of (-)-germacrene D. In terms of tissue distribution, mainly expressed in fully expanded leaves, lateral roots, axillary and shoot apex, and, to a lower extent, in internodes and nodes.

It is found in the nucleus. Functionally, component of SCF(ASK-cullin-F-box) E3 ubiquitin ligase complexes, which may mediate the ubiquitination and subsequent proteasomal degradation of target proteins. Is necessary for responses to strigolactones and may be involved in the ubiquitin-mediated degradation of specific proteins that activate axillary growth. Targets probably SMAX1A to degradation upon the formation of an E3 SCF ubiquitin ligase complex (ASK-cullin-F-box) containing MAX2A and KAI2IA in response to (-)-germacrene D in the stigma. The protein is F-box protein MAX2 homolog A of Petunia hybrida (Petunia).